The following is a 213-amino-acid chain: Large ribosomal subunit protein uL1 (213 aa).

This sequence belongs to the universal ribosomal protein uL1 family. Part of the 50S ribosomal subunit.

Its function is as follows. Probably involved in E site tRNA release. Binds directly to 23S rRNA. In terms of biological role, protein L1 is also a translational repressor protein, it controls the translation of the L1 operon by binding to its mRNA. Thus it also controls transcription of L10 and L12 by translational coupling. Unlike the case in E.coli, where the site is in the untranslated mRNA leader, this site is within the L1 protein's structural gene. The sequence is that of Large ribosomal subunit protein uL1 from Methanococcus vannielii (strain ATCC 35089 / DSM 1224 / JCM 13029 / OCM 148 / SB).